The primary structure comprises 441 residues: Diuretic hormone receptor (441 aa).

N99, N107, and N112 each carry an N-linked (GlcNAc...) asparagine glycan. A helical membrane pass occupies residues 135–158 (FVFFVGFCLSLVAIAVAIWIFLYF). Topologically, residues 159–166 (KDLRCLRN) are cytoplasmic. A helical transmembrane segment spans residues 167–187 (TIHTNLMATYICNDATWIISA). Topologically, residues 188-194 (VVQEYVE) are extracellular. Residues 195-224 (NGGLCSVLAVLMHYFYLTNFFWMFVEGLYL) form a helical membrane-spanning segment. The Cytoplasmic portion of the chain corresponds to 225-238 (FLLVVATFTGEKVK). Residues 239–260 (LQIYIIIGWGIPGVIVVTWAII) traverse the membrane as a helical segment. Topologically, residues 261 to 291 (KHLGKTAPDNAGESHPMVLLIKHCPWMAEDY) are extracellular. The chain crosses the membrane as a helical span at residues 292 to 315 (FDWIHQAPVITVLAVNLVFLFSIM). Topologically, residues 316 to 338 (WVLITKLQSANTAETQQYRKATK) are cytoplasmic. The chain crosses the membrane as a helical span at residues 339–357 (ALLVLFPLLGITYILMMQG). Topologically, residues 358-371 (PMDGVAGHVFRNAQ) are extracellular. The chain crosses the membrane as a helical span at residues 372–391 (ALLLSLQGFTVALFYCFLNT). Over 392 to 441 (EVQNTLRHRMSRWRETRTVGGGRRYTLSGHSKDWSPRSRTESIRCLQHRS) the chain is Cytoplasmic.

The protein belongs to the G-protein coupled receptor 2 family. As to expression, expressed in Malpighian tubules.

It localises to the cell membrane. Its function is as follows. Receptor for the insect diurectic hormone. The activity of this receptor is mediated by G proteins which activate adenylyl cyclase. This chain is Diuretic hormone receptor, found in Acheta domesticus (House cricket).